Here is a 335-residue protein sequence, read N- to C-terminus: Mitochondrial amidoxime reducing component 2 (335 aa).

The transit peptide at 1–35 (MGASSSSALARLGLPARPWPRWLGVAALGLAAVAL) directs the protein to the mitochondrion. Glycyl lysine isopeptide (Lys-Gly) (interchain with G-Cter in ubiquitin) cross-links involve residues Lys59, Lys138, and Lys144. At Lys156 the chain carries N6-acetyllysine; alternate. A Glycyl lysine isopeptide (Lys-Gly) (interchain with G-Cter in ubiquitin); alternate cross-link involves residue Lys156. Residues Lys166, Lys173, Lys187, Lys287, and Lys294 each participate in a glycyl lysine isopeptide (Lys-Gly) (interchain with G-Cter in ubiquitin) cross-link. Residues 188–334 (GRTSRKLLPT…LRVGDPVYRM (147 aa)) form the MOSC domain.

As to quaternary structure, component of a complex composed of cytochrome b5, NADH-cytochrome b5 reductase (CYB5R3) and MTARC2. Mo-molybdopterin serves as cofactor. Ubiquitinated by PRKN during mitophagy, leading to its degradation and enhancement of mitophagy. Deubiquitinated by USP30.

Its subcellular location is the mitochondrion outer membrane. It localises to the peroxisome. The enzyme catalyses N(omega)-hydroxy-L-arginine + 2 Fe(II)-[cytochrome b5] + 2 H(+) = L-arginine + 2 Fe(III)-[cytochrome b5] + H2O. Its function is as follows. Catalyzes the reduction of N-oxygenated molecules, acting as a counterpart of cytochrome P450 and flavin-containing monooxygenases in metabolic cycles. As a component of prodrug-converting system, reduces a multitude of N-hydroxylated prodrugs particularly amidoximes, leading to increased drug bioavailability. May be involved in mitochondrial N(omega)-hydroxy-L-arginine (NOHA) reduction, regulating endogenous nitric oxide levels and biosynthesis. Postulated to cleave the N-OH bond of N-hydroxylated substrates in concert with electron transfer from NADH to cytochrome b5 reductase then to cytochrome b5, the ultimate electron donor that primes the active site for substrate reduction. In Homo sapiens (Human), this protein is Mitochondrial amidoxime reducing component 2.